Here is a 104-residue protein sequence, read N- to C-terminus: Large ribosomal subunit protein uL24 (104 aa).

It belongs to the universal ribosomal protein uL24 family. As to quaternary structure, part of the 50S ribosomal subunit.

Functionally, one of two assembly initiator proteins, it binds directly to the 5'-end of the 23S rRNA, where it nucleates assembly of the 50S subunit. One of the proteins that surrounds the polypeptide exit tunnel on the outside of the subunit. This chain is Large ribosomal subunit protein uL24, found in Buchnera aphidicola subsp. Acyrthosiphon pisum (strain 5A).